We begin with the raw amino-acid sequence, 400 residues long: MAKAKFERTKPHVNIGTIGHVDHGKTTLTAAITKVLALKGKAQFMAYDQIDKAPEERERGITINTAHVEYETDARHYAHVDCPGHADYVKNMITGAAQMDGAILVVSAADGPMPQTREHILLARQVNVPYIVVFLNKVDMVDDPELIELVEMEVRELLSKYGYPGDEVPIVKGSALKALESPSQDPNAPEYQCILELMDVVDKYIPTPQRDVDKPFLMPIEDVFSITGRGTVVTGRVERGTLKTGEEVEIVGFAPEPRKTVVTGIEMFRKVLDEAVAGDNVGCLLRGIQKNEVERGQVLAKPGTIKPHTKFKAQVYVLTKEEGGRHTPFFNGYRPQFYFRTTDVTGTITLPEGVEMCMPGDNVEMTVELISPIAIESGLRFAIREGGRTVGAGSVTTIIE.

Residues 10–209 (KPHVNIGTIG…VVDKYIPTPQ (200 aa)) enclose the tr-type G domain. The tract at residues 19 to 26 (GHVDHGKT) is G1. Position 19-26 (19-26 (GHVDHGKT)) interacts with GTP. Thr-26 contacts Mg(2+). A G2 region spans residues 60-64 (GITIN). Positions 81–84 (DCPG) are G3. Residues 81–85 (DCPGH) and 136–139 (NKVD) each bind GTP. The segment at 136-139 (NKVD) is G4. A G5 region spans residues 174 to 176 (SAL).

This sequence belongs to the TRAFAC class translation factor GTPase superfamily. Classic translation factor GTPase family. EF-Tu/EF-1A subfamily. As to quaternary structure, monomer.

It is found in the cytoplasm. The enzyme catalyses GTP + H2O = GDP + phosphate + H(+). GTP hydrolase that promotes the GTP-dependent binding of aminoacyl-tRNA to the A-site of ribosomes during protein biosynthesis. This chain is Elongation factor Tu, found in Caldicellulosiruptor saccharolyticus (strain ATCC 43494 / DSM 8903 / Tp8T 6331).